Consider the following 155-residue polypeptide: Endoribonuclease YbeY (155 aa).

Zn(2+)-binding residues include His114, His118, and His124.

It belongs to the endoribonuclease YbeY family. The cofactor is Zn(2+).

Its subcellular location is the cytoplasm. Functionally, single strand-specific metallo-endoribonuclease involved in late-stage 70S ribosome quality control and in maturation of the 3' terminus of the 16S rRNA. The sequence is that of Endoribonuclease YbeY from Escherichia coli O157:H7.